Here is a 275-residue protein sequence, read N- to C-terminus: MNSFVIRNGFGLVRTFNTRLFTTSTQNLEGELKTILGQAKVSKLQEKLKLDPRSKITFNDFKGIAKEVGIEEKEINSVSNALAQSGSIIYLPNSLNENLKTSVFTKPAHIYQSLEHILDIENKGVGLNKLIESKKSEINSLRQKIQPLEEKKQVIDRKAHRRATAIIWTGLGYCFAQAAILARLTWWDLSWDIIEPVSYFLTFGSVLIGYTYFTMTKTEFTYEALNHRLFSKRQDKLFKRNNFPKEDYENLVQAIDKKEKELKELELATKYDHTH.

Residues 1–28 (MNSFVIRNGFGLVRTFNTRLFTTSTQNL) constitute a mitochondrion transit peptide. Over 29–165 (EGELKTILGQ…DRKAHRRATA (137 aa)) the chain is Mitochondrial matrix. Positions 125 to 157 (VGLNKLIESKKSEINSLRQKIQPLEEKKQVIDR) form a coiled coil. A helical membrane pass occupies residues 166–186 (IIWTGLGYCFAQAAILARLTW). The Mitochondrial intermembrane segment spans residues 187-192 (WDLSWD). Residues 191–199 (WDIIEPVSY) carry the Selectivity filter motif. A helical transmembrane segment spans residues 193–213 (IIEPVSYFLTFGSVLIGYTYF). Glu-195 contributes to the Ca(2+) binding site. Residues 214 to 275 (TMTKTEFTYE…ELATKYDHTH (62 aa)) are Mitochondrial matrix-facing. Residues 244-270 (PKEDYENLVQAIDKKEKELKELELATK) adopt a coiled-coil conformation.

It belongs to the MCU (TC 1.A.77) family. Homooligomer.

It is found in the mitochondrion inner membrane. The catalysed reaction is Ca(2+)(in) = Ca(2+)(out). Inhibited by ruthenium red or its derivative Ru360. In terms of biological role, mitochondrial inner membrane calcium uniporter that mediates calcium uptake into mitochondria. Constitutes a pore-forming and calcium-conducting subunit. Mitochondrial calcium homeostasis plays key roles in cellular physiology and regulates cell bioenergetics, cytoplasmic calcium signals and activation of cell death pathways. Sufficient to operate as a pore-forming channel without the need of calcium-sensor or auxiliary subunit. The polypeptide is Calcium uniporter protein, mitochondrial (Dictyostelium discoideum (Social amoeba)).